A 199-amino-acid polypeptide reads, in one-letter code: Superoxide dismutase [Mn/Fe] 2 (199 aa).

Residues H27, H81, D161, and H165 each contribute to the Fe(3+) site. The Mn(2+) site is built by H27, H81, D161, and H165.

This sequence belongs to the iron/manganese superoxide dismutase family. As to quaternary structure, homodimer. Can also form a heterodimer with SodA. It depends on Mn(2+) as a cofactor. The cofactor is Fe(3+).

The enzyme catalyses 2 superoxide + 2 H(+) = H2O2 + O2. Its function is as follows. Destroys superoxide anion radicals which are normally produced within the cells and which are toxic to biological systems. Catalyzes the dismutation of superoxide anion radicals into O2 and H2O2 by successive reduction and oxidation of the transition metal ion at the active site. The protein is Superoxide dismutase [Mn/Fe] 2 (sodM) of Staphylococcus aureus (strain bovine RF122 / ET3-1).